The chain runs to 164 residues: Transcription elongation factor GreA (164 aa).

Residues 12–38 (RRLERELERLKKERPGVILAIKEAREE) are a coiled coil.

This sequence belongs to the GreA/GreB family.

Functionally, necessary for efficient RNA polymerase transcription elongation past template-encoded arresting sites. The arresting sites in DNA have the property of trapping a certain fraction of elongating RNA polymerases that pass through, resulting in locked ternary complexes. Cleavage of the nascent transcript by cleavage factors such as GreA or GreB allows the resumption of elongation from the new 3'terminus. GreA releases sequences of 2 to 3 nucleotides. The polypeptide is Transcription elongation factor GreA (Solidesulfovibrio magneticus (strain ATCC 700980 / DSM 13731 / RS-1) (Desulfovibrio magneticus)).